We begin with the raw amino-acid sequence, 227 residues long: Orotidine 5'-phosphate decarboxylase (227 aa).

Residues aspartate 8, lysine 30, 59-68, threonine 118, arginine 178, glutamine 187, glycine 207, and arginine 208 contribute to the substrate site; that span reads DLKLYDIPNT. Lysine 61 functions as the Proton donor in the catalytic mechanism.

Belongs to the OMP decarboxylase family. Type 1 subfamily. In terms of assembly, homodimer.

It catalyses the reaction orotidine 5'-phosphate + H(+) = UMP + CO2. The protein operates within pyrimidine metabolism; UMP biosynthesis via de novo pathway; UMP from orotate: step 2/2. Its function is as follows. Catalyzes the decarboxylation of orotidine 5'-monophosphate (OMP) to uridine 5'-monophosphate (UMP). The protein is Orotidine 5'-phosphate decarboxylase of Sulfurimonas denitrificans (strain ATCC 33889 / DSM 1251) (Thiomicrospira denitrificans (strain ATCC 33889 / DSM 1251)).